We begin with the raw amino-acid sequence, 226 residues long: Cytidylate kinase (226 aa).

10 to 18 contacts ATP; that stretch reads GFSSTGKST.

Belongs to the cytidylate kinase family. Type 1 subfamily.

It is found in the cytoplasm. The catalysed reaction is CMP + ATP = CDP + ADP. It carries out the reaction dCMP + ATP = dCDP + ADP. The sequence is that of Cytidylate kinase from Flavobacterium psychrophilum (strain ATCC 49511 / DSM 21280 / CIP 103535 / JIP02/86).